Consider the following 700-residue polypeptide: Kin of IRRE-like protein 2 (700 aa).

The signal sequence occupies residues 1–19 (MLASALLVFLCCFKGHAGS). Over 20–507 (SPHFLQQPED…GRRDLLPTVR (488 aa)) the chain is Extracellular. Ig-like C2-type domains are found at residues 21-115 (PHFL…AQLH), 120-219 (PEAP…VTLS), 224-304 (PMVT…TALE), 309-391 (PILQ…ARLT), and 395-497 (PPVV…QIHL). Cys42 and Cys100 are joined by a disulfide. The N-linked (GlcNAc...) asparagine glycan is linked to Asn140. Cystine bridges form between Cys143–Cys201 and Cys245–Cys288. The Cell attachment site signature appears at 146–148 (RGD). N-linked (GlcNAc...) asparagine glycosylation occurs at Asn298. Intrachain disulfides connect Cys330/Cys372 and Cys416/Cys482. Residue Asn481 is glycosylated (N-linked (GlcNAc...) asparagine). A helical membrane pass occupies residues 508-528 (IVAGAASAATSLLMVITGVVL). The Cytoplasmic portion of the chain corresponds to 529–700 (CCWRHGSLSK…PSHQRLQTHV (172 aa)). Positions 542-576 (LVRIPGSSEGSSSRGPEEETGSSEDRGPIVHTDHS) are disordered. At Ser563 the chain carries Phosphoserine. Residues 564 to 576 (SEDRGPIVHTDHS) are compositionally biased toward basic and acidic residues. 3 positions are modified to phosphotyrosine: Tyr595, Tyr596, and Tyr653. The disordered stretch occupies residues 671–700 (FGPPELSSGTPPFPYATLSPPSHQRLQTHV). Positions 689 to 700 (SPPSHQRLQTHV) are enriched in polar residues.

This sequence belongs to the immunoglobulin superfamily. In terms of assembly, homodimer. Interacts with NPHS2/podocin (via the C-terminus). Interacts with NPHS1 (via the Ig-like domains). Interacts with FYN. N-glycosylated. In terms of processing, phosphorylated at Ser-548 or Ser-549; due to site ambiguity, the exact position of the serine phosphorylation could not be determined. Phosphorylation at residues Tyr-631 and/or Tyr-632. FYN mediates tyrosine phosphorylation in pancreatic beta-cells. Post-translationally, the extracellular domain is cleaved leading to the generation of a soluble fragment and a membrane-bound C-terminal fragment, which is further cleaved by gamma-secretase. As to expression, highly expressed in beta-cells of the pancreatic islets. Expression is seen in podocytes of kidney glomeruli, and in the cerebellum and hindbrain at 12.5 dpc, in the spinal cord at 10.5 dpc, and in retina and hypothalamus at 13.5 dpc.

Its subcellular location is the cell membrane. Its function is as follows. May regulate basal insulin secretion. The chain is Kin of IRRE-like protein 2 (Kirrel2) from Mus musculus (Mouse).